We begin with the raw amino-acid sequence, 206 residues long: Thymidylate kinase (206 aa).

Gly-11–Thr-18 serves as a coordination point for ATP.

Belongs to the thymidylate kinase family.

The catalysed reaction is dTMP + ATP = dTDP + ADP. In terms of biological role, phosphorylation of dTMP to form dTDP in both de novo and salvage pathways of dTTP synthesis. In Burkholderia thailandensis (strain ATCC 700388 / DSM 13276 / CCUG 48851 / CIP 106301 / E264), this protein is Thymidylate kinase.